The chain runs to 805 residues: Na(+)/H(+) antiporter subunit A (805 aa).

21 helical membrane passes run 4–22 (LHWA…PFLY), 29–51 (HTGW…YLSI), 80–102 (SLLF…IFYL), 109–128 (LNNF…GVVL), 132–154 (LIVL…SYWF), 167–189 (MLIT…VMTG), 209–231 (FLPA…PFHI), 244–266 (SAYL…LTPV), 271–293 (AEWF…TSAV), 300–322 (GILA…LGSA), 332–354 (PAFY…TFKG), 375–397 (LGGL…ASMA), 431–453 (IIIV…IMFF), 474–496 (IGML…FPNI), 529–551 (GFNA…FLMM), 597–614 (YFAY…YTMF), 629–651 (IAPY…PFIN), 656–674 (AVVV…FVVF), 679–701 (LALT…FYHL), 714–736 (NVLN…LSSL), and 778–795 (MLEV…IALI).

The protein belongs to the CPA3 antiporters (TC 2.A.63) subunit A family. In terms of assembly, forms a heterooligomeric complex that consists of seven subunits: MrpA, MrpB, MrpC, MrpD, MrpE, MrpF and MrpG.

It is found in the cell membrane. In terms of biological role, mnh complex is a Na(+)Li(+)/H(+) antiporter involved in Na(+) and/or Li(+) excretion and Na(+) resistance. Na(+)/H(+) antiport consumes a transmembrane electrical potential, and is thus inferred to be electrogenic. Does not transport K(+), Ca(2+) or Mg(2+). In Alkalihalophilus pseudofirmus (strain ATCC BAA-2126 / JCM 17055 / OF4) (Bacillus pseudofirmus), this protein is Na(+)/H(+) antiporter subunit A (mrpA).